Consider the following 616-residue polypeptide: Dihydroxy-acid dehydratase (616 aa).

Asp81 provides a ligand contact to Mg(2+). Position 122 (Cys122) interacts with [2Fe-2S] cluster. The Mg(2+) site is built by Asp123 and Lys124. Position 124 is an N6-carboxylysine (Lys124). Residue Cys195 participates in [2Fe-2S] cluster binding. Glu491 is a Mg(2+) binding site. Ser517 (proton acceptor) is an active-site residue.

This sequence belongs to the IlvD/Edd family. As to quaternary structure, homodimer. [2Fe-2S] cluster serves as cofactor. Mg(2+) is required as a cofactor.

It carries out the reaction (2R)-2,3-dihydroxy-3-methylbutanoate = 3-methyl-2-oxobutanoate + H2O. The enzyme catalyses (2R,3R)-2,3-dihydroxy-3-methylpentanoate = (S)-3-methyl-2-oxopentanoate + H2O. The protein operates within amino-acid biosynthesis; L-isoleucine biosynthesis; L-isoleucine from 2-oxobutanoate: step 3/4. Its pathway is amino-acid biosynthesis; L-valine biosynthesis; L-valine from pyruvate: step 3/4. In terms of biological role, functions in the biosynthesis of branched-chain amino acids. Catalyzes the dehydration of (2R,3R)-2,3-dihydroxy-3-methylpentanoate (2,3-dihydroxy-3-methylvalerate) into 2-oxo-3-methylpentanoate (2-oxo-3-methylvalerate) and of (2R)-2,3-dihydroxy-3-methylbutanoate (2,3-dihydroxyisovalerate) into 2-oxo-3-methylbutanoate (2-oxoisovalerate), the penultimate precursor to L-isoleucine and L-valine, respectively. The protein is Dihydroxy-acid dehydratase of Escherichia coli O7:K1 (strain IAI39 / ExPEC).